We begin with the raw amino-acid sequence, 292 residues long: 33 kDa chaperonin (292 aa).

Intrachain disulfides connect Cys-230/Cys-232 and Cys-263/Cys-266.

Belongs to the HSP33 family. In terms of processing, under oxidizing conditions two disulfide bonds are formed involving the reactive cysteines. Under reducing conditions zinc is bound to the reactive cysteines and the protein is inactive.

Its subcellular location is the cytoplasm. Functionally, redox regulated molecular chaperone. Protects both thermally unfolding and oxidatively damaged proteins from irreversible aggregation. Plays an important role in the bacterial defense system toward oxidative stress. This is 33 kDa chaperonin from Enterobacter sp. (strain 638).